We begin with the raw amino-acid sequence, 226 residues long: Ras-related protein Rab11A (226 aa).

GTP-binding positions include 24-32 (GDSAVGKSQ), 43-49 (SLDSKST), 72-76 (DTAGQ), 130-133 (NKCD), and 160-162 (SAL). Residues 46 to 54 (SKSTIGVEF) carry the Effector region motif. Residues C222 and C223 are each lipidated (S-geranylgeranyl cysteine). Cysteine methyl ester is present on C223. A propeptide spans 224–226 (QAS) (removed in mature form).

This sequence belongs to the small GTPase superfamily. Rab family.

The protein resides in the cell membrane. The chain is Ras-related protein Rab11A (RAB11A) from Lotus japonicus (Lotus corniculatus var. japonicus).